The following is a 130-amino-acid chain: Small ribosomal subunit protein uS8 (130 aa).

This sequence belongs to the universal ribosomal protein uS8 family. As to quaternary structure, part of the 30S ribosomal subunit. Contacts proteins S5 and S12.

One of the primary rRNA binding proteins, it binds directly to 16S rRNA central domain where it helps coordinate assembly of the platform of the 30S subunit. This is Small ribosomal subunit protein uS8 from Salmonella arizonae (strain ATCC BAA-731 / CDC346-86 / RSK2980).